The sequence spans 231 residues: 7-cyano-7-deazaguanine synthase (231 aa).

Residue 17-27 coordinates ATP; it reads FSGGMDSFTLL. Zn(2+) is bound by residues cysteine 193, cysteine 201, cysteine 204, and cysteine 207.

The protein belongs to the QueC family. Zn(2+) is required as a cofactor.

It carries out the reaction 7-carboxy-7-deazaguanine + NH4(+) + ATP = 7-cyano-7-deazaguanine + ADP + phosphate + H2O + H(+). The protein operates within purine metabolism; 7-cyano-7-deazaguanine biosynthesis. Catalyzes the ATP-dependent conversion of 7-carboxy-7-deazaguanine (CDG) to 7-cyano-7-deazaguanine (preQ(0)). The protein is 7-cyano-7-deazaguanine synthase of Hahella chejuensis (strain KCTC 2396).